Consider the following 181-residue polypeptide: Adenylate kinase (181 aa).

10-15 (GAGKGT) serves as a coordination point for ATP. The interval 30 to 59 (STGDLFRKNIGDGTPLGLEAKRYLDAGDLV) is NMP. Residues threonine 31, arginine 36, 57–59 (DLV), 85–88 (GYPR), and glutamine 92 contribute to the AMP site. Positions 126 to 132 (GRGRADD) are LID. Arginine 127 contacts ATP. Positions 129 and 140 each coordinate AMP. ATP is bound at residue glycine 166.

It belongs to the adenylate kinase family. In terms of assembly, monomer.

It is found in the cytoplasm. It catalyses the reaction AMP + ATP = 2 ADP. It participates in purine metabolism; AMP biosynthesis via salvage pathway; AMP from ADP: step 1/1. In terms of biological role, catalyzes the reversible transfer of the terminal phosphate group between ATP and AMP. Plays an important role in cellular energy homeostasis and in adenine nucleotide metabolism. The polypeptide is Adenylate kinase (Mycolicibacterium smegmatis (strain ATCC 700084 / mc(2)155) (Mycobacterium smegmatis)).